The sequence spans 334 residues: AA9 family lytic polysaccharide monooxygenase A (334 aa).

The signal sequence occupies residues 1 to 22 (MSPSFKSTAILGAVALAARVRA). Residues His-23 and His-108 each contribute to the Cu(2+) site. 2 cysteine pairs are disulfide-bonded: Cys-78–Cys-200 and Cys-119–Cys-123. Asn-160 carries N-linked (GlcNAc...) asparagine glycosylation. O2 is bound by residues His-186 and Gln-195. Tyr-197 is a binding site for Cu(2+). Asn-208 is a glycosylation site (N-linked (GlcNAc...) asparagine). A disordered region spans residues 244–304 (GPALYTGGSS…PSPSLPVEIP (61 aa)). Residues 249–265 (TGGSSPSPNPPTSTQSP) show a composition bias toward low complexity.

Belongs to the polysaccharide monooxygenase AA9 family. Cu(2+) serves as cofactor.

It is found in the secreted. The enzyme catalyses [(1-&gt;4)-beta-D-glucosyl]n+m + reduced acceptor + O2 = 4-dehydro-beta-D-glucosyl-[(1-&gt;4)-beta-D-glucosyl]n-1 + [(1-&gt;4)-beta-D-glucosyl]m + acceptor + H2O.. Functionally, lytic polysaccharide monooxygenase (LPMO) that depolymerizes crystalline and amorphous polysaccharides via the oxidation of scissile alpha- or beta-(1-4)-glycosidic bonds, yielding C1 or C4 oxidation products. Catalysis by LPMOs requires the reduction of the active-site copper from Cu(II) to Cu(I) by a reducing agent and H(2)O(2) or O(2) as a cosubstrate. Active on hemicelluloses, including xylan, glucomannan, and xyloglucan. Shows clear activity on cellooligosaccharides, generating C4 oxidation products. Also displays activity on konjac glucomannan (KGM), a linear beta-1,4-linked mannan with randomly distributed glucosyl residues; as well as trace activity on lichenan, a linear beta-1,3-beta-1,4-glucan with a 1:2 ratio of beta-1,3 to beta-1,4 linkages. Has no activity on ivory nut mannan (INM), a linear beta-1,4-linked mannan without substitutions. The chain is AA9 family lytic polysaccharide monooxygenase A from Malbranchea cinnamomea (Thermophilic fungus).